Here is a 172-residue protein sequence, read N- to C-terminus: Counting factor-associated protein B (172 aa).

Residues 1-21 form the signal peptide; sequence MKLLNSLILLVLTCLVSSINT. N37 and N153 each carry an N-linked (GlcNAc...) asparagine glycan.

Its subcellular location is the secreted. This is Counting factor-associated protein B (cfaB) from Dictyostelium discoideum (Social amoeba).